A 209-amino-acid chain; its full sequence is dITP/XTP pyrophosphatase (209 aa).

7 to 12 (SSHGYK) serves as a coordination point for substrate. The active-site Proton acceptor is Asp70. A Mg(2+)-binding site is contributed by Asp70. Substrate is bound by residues Ser71, 154-157 (FGYD), Lys177, and 182-183 (HR).

The protein belongs to the HAM1 NTPase family. As to quaternary structure, homodimer. The cofactor is Mg(2+).

It carries out the reaction XTP + H2O = XMP + diphosphate + H(+). The enzyme catalyses dITP + H2O = dIMP + diphosphate + H(+). The catalysed reaction is ITP + H2O = IMP + diphosphate + H(+). Its function is as follows. Pyrophosphatase that catalyzes the hydrolysis of nucleoside triphosphates to their monophosphate derivatives, with a high preference for the non-canonical purine nucleotides XTP (xanthosine triphosphate), dITP (deoxyinosine triphosphate) and ITP. Seems to function as a house-cleaning enzyme that removes non-canonical purine nucleotides from the nucleotide pool, thus preventing their incorporation into DNA/RNA and avoiding chromosomal lesions. This is dITP/XTP pyrophosphatase from Chlamydia trachomatis serovar A (strain ATCC VR-571B / DSM 19440 / HAR-13).